A 107-amino-acid polypeptide reads, in one-letter code: Regulatory protein SoxS (107 aa).

An HTH araC/xylS-type domain is found at 8–106; that stretch reads QDLIAWIDEH…DRTPSDYRHR (99 aa). 2 DNA-binding regions (H-T-H motif) span residues 25–46 and 73–96; these read DVVA…RTVT and IFDI…RRQF.

It localises to the cytoplasm. Functionally, transcriptional activator of the superoxide response regulon of E.coli that includes at least 10 genes such as sodA, nfo, zwf and micF. Binds the DNA sequence 5'-GCACN(7)CAA-3'. It also facilitates the subsequent binding of RNA polymerase to the micF and the nfo promoters. This chain is Regulatory protein SoxS (soxS), found in Escherichia coli O157:H7.